A 159-amino-acid polypeptide reads, in one-letter code: Cytochrome b6-f complex subunit 4 (159 aa).

The next 3 helical transmembrane spans lie at 36–56, 95–115, and 131–151; these read LLYI…GLAV, LLGV…PFLE, and TVFL…TLPI.

Belongs to the cytochrome b family. PetD subfamily. The 4 large subunits of the cytochrome b6-f complex are cytochrome b6, subunit IV (17 kDa polypeptide, petD), cytochrome f and the Rieske protein, while the 4 small subunits are petG, petL, petM and petN. The complex functions as a dimer.

It localises to the plastid. Its subcellular location is the chloroplast thylakoid membrane. Component of the cytochrome b6-f complex, which mediates electron transfer between photosystem II (PSII) and photosystem I (PSI), cyclic electron flow around PSI, and state transitions. In Piper cenocladum (Ant piper), this protein is Cytochrome b6-f complex subunit 4.